We begin with the raw amino-acid sequence, 253 residues long: MRTPIIAGNWKMNKTVQEAKDFVNALPTLPDSKEVESVICAPAIQLDALTTAVKEGKAQGLEIGAQNTYFEDNGAFTGETSPVALADLGVKYVVIGHSERRELFHETDEEINKKAHAIFKHGMTPIICVGETDEERESGKANDVVGEQVKKAVAGLSEDQLKSVVIAYEPIWAIGTGKSSTSEDANEMCAFVRQTIADLSSKEVSEATRIQYGGSVKPNNIKEYMAQTDIDGALVGGASLKVEDFVQLLEGAK.

9–11 lines the substrate pocket; the sequence is NWK. H97 functions as the Electrophile in the catalytic mechanism. E169 (proton acceptor) is an active-site residue. Substrate-binding positions include G175, S215, and 236–237; that span reads GG.

The protein belongs to the triosephosphate isomerase family. Homodimer.

The protein localises to the cytoplasm. It catalyses the reaction D-glyceraldehyde 3-phosphate = dihydroxyacetone phosphate. It participates in carbohydrate biosynthesis; gluconeogenesis. It functions in the pathway carbohydrate degradation; glycolysis; D-glyceraldehyde 3-phosphate from glycerone phosphate: step 1/1. Functionally, involved in the gluconeogenesis. Catalyzes stereospecifically the conversion of dihydroxyacetone phosphate (DHAP) to D-glyceraldehyde-3-phosphate (G3P). In Staphylococcus aureus (strain Mu50 / ATCC 700699), this protein is Triosephosphate isomerase.